Consider the following 71-residue polypeptide: MRCVPVFIILLLLASPAASDPLEKRIQSDLIRAALEDADTKNDPRILEDIVSTALATCCKFQFLNFCCNEK.

The signal sequence occupies residues 1–19 (MRCVPVFIILLLLASPAAS). Residues 20–56 (DPLEKRIQSDLIRAALEDADTKNDPRILEDIVSTALA) constitute a propeptide that is removed on maturation.

It belongs to the conotoxin T superfamily. Contains 2 disulfide bonds that can be either 'C1-C3, C2-C4' or 'C1-C4, C2-C3', since these disulfide connectivities have been observed for conotoxins with cysteine framework V (for examples, see AC P0DQQ7 and AC P81755). As to expression, expressed by the venom duct.

Its subcellular location is the secreted. The protein is Conotoxin Ca5.1 of Conus caracteristicus (Characteristic cone).